The primary structure comprises 37 residues: M-oxotoxin-Ot2d (37 aa).

In terms of tissue distribution, expressed by the venom gland.

Its subcellular location is the secreted. Functionally, disrupts biological membranes, particularly those rich in phosphocholine. Has antimicrobial activity against Gram-negative bacterium E.coli, Gram-positive bacteria B.subtilis and S.aureus, and hemolytic activity against sheep, pig and guinea pig red blood cells. Has insecticidal activity against S.frugiperda ovarian cells by opening non-selective ion channels. Enhances the insecticidal activity of spider venom neurotoxic peptides. The polypeptide is M-oxotoxin-Ot2d (Oxyopes takobius (Lynx spider)).